A 201-amino-acid polypeptide reads, in one-letter code: Xanthine phosphoribosyltransferase (201 aa).

Residues Leu-20 and Asn-27 each contribute to the xanthine site. 129–133 (ANGQA) contributes to the 5-phospho-alpha-D-ribose 1-diphosphate binding site. Position 157 (Lys-157) interacts with xanthine.

The protein belongs to the purine/pyrimidine phosphoribosyltransferase family. Xpt subfamily. In terms of assembly, homodimer.

It localises to the cytoplasm. It carries out the reaction XMP + diphosphate = xanthine + 5-phospho-alpha-D-ribose 1-diphosphate. The protein operates within purine metabolism; XMP biosynthesis via salvage pathway; XMP from xanthine: step 1/1. In terms of biological role, converts the preformed base xanthine, a product of nucleic acid breakdown, to xanthosine 5'-monophosphate (XMP), so it can be reused for RNA or DNA synthesis. This Shouchella clausii (strain KSM-K16) (Alkalihalobacillus clausii) protein is Xanthine phosphoribosyltransferase.